We begin with the raw amino-acid sequence, 416 residues long: UDP-N-acetylmuramoylalanine--D-glutamate ligase (416 aa).

Residue 108–114 participates in ATP binding; the sequence is GTTGKTT.

It belongs to the MurCDEF family.

It is found in the cytoplasm. The enzyme catalyses UDP-N-acetyl-alpha-D-muramoyl-L-alanine + D-glutamate + ATP = UDP-N-acetyl-alpha-D-muramoyl-L-alanyl-D-glutamate + ADP + phosphate + H(+). It functions in the pathway cell wall biogenesis; peptidoglycan biosynthesis. In terms of biological role, cell wall formation. Catalyzes the addition of glutamate to the nucleotide precursor UDP-N-acetylmuramoyl-L-alanine (UMA). This Chlamydia trachomatis serovar A (strain ATCC VR-571B / DSM 19440 / HAR-13) protein is UDP-N-acetylmuramoylalanine--D-glutamate ligase.